The primary structure comprises 221 residues: NEDD8 ultimate buster 1 (221 aa).

UBA domains are found at residues 1–19, 30–76, and 95–135; these read LGLRACDGNVDHAAVHIAN, EERE…LLHN, and SPSQ…LVHN. The segment at 136–193 is disordered; it reads GGRLPPDLQLSAEDSSSTPSTSPSDSAGTSSASTDEDMETEAVNEILEDIPEHEEDYL. Over residues 146–168 the composition is skewed to low complexity; it reads SAEDSSSTPSTSPSDSAGTSSAS. Residues 169–193 show a composition bias toward acidic residues; the sequence is TDEDMETEAVNEILEDIPEHEEDYL.

As to quaternary structure, directly interacts with NEDD8 and PSMD4/S5a, a member of the regulatory subunit of the 26S proteasome. Interacts with AIPL1.

The protein resides in the nucleus. In terms of biological role, specific down-regulator of the NEDD8 conjugation system. Recruits NEDD8 and its conjugates to the proteasome for degradation. This is NEDD8 ultimate buster 1 (NUB1) from Bos taurus (Bovine).